The primary structure comprises 635 residues: Threonine--tRNA ligase (635 aa).

In terms of domain architecture, TGS spans 1–61; sequence MIAITLPDGS…EQNVDLAIVT (61 aa). The segment at 242-533 is catalytic; that stretch reads DHRKLGKLLD…LLENHAGALP (292 aa). Cys333, His384, and His510 together coordinate Zn(2+).

It belongs to the class-II aminoacyl-tRNA synthetase family. In terms of assembly, homodimer. Zn(2+) serves as cofactor.

It localises to the cytoplasm. The enzyme catalyses tRNA(Thr) + L-threonine + ATP = L-threonyl-tRNA(Thr) + AMP + diphosphate + H(+). Its function is as follows. Catalyzes the attachment of threonine to tRNA(Thr) in a two-step reaction: L-threonine is first activated by ATP to form Thr-AMP and then transferred to the acceptor end of tRNA(Thr). Also edits incorrectly charged L-seryl-tRNA(Thr). In Ralstonia nicotianae (strain ATCC BAA-1114 / GMI1000) (Ralstonia solanacearum), this protein is Threonine--tRNA ligase.